A 122-amino-acid chain; its full sequence is RxLR effector protein Avh52 (122 aa).

The signal sequence occupies residues 1–21 (MRLTSILVLVIAATFHTTGTA). A RxLR-dEER motif is present at residues 50 to 68 (RLLRRVEKDKVDYEQDEQR). The interval 69–86 (SFGALKDAVKKLNPVTAV) is TAP1-binding. The segment at 87 to 98 (KKFFKQRAKRKK) is nuclear localization signal (NLS).

It belongs to the RxLR effector family. As to quaternary structure, interacts with host acetyl transferase TAP1.

It localises to the secreted. Its subcellular location is the host nucleus. Its function is as follows. Effector that suppresses plant defense responses during the early stages of pathogen infection. Suppresses cell death induced by effectors and PAMPs in plant hosts. Interacts with host acetyltransferase TAP1 and causes TAP1 relocation into the nucleus where it acetylates histones H2A and H3 during early infection, thereby promoting susceptibility of host plant to P.sojae. The polypeptide is RxLR effector protein Avh52 (Phytophthora sojae (strain P6497) (Soybean stem and root rot agent)).